Reading from the N-terminus, the 388-residue chain is NADH-quinone oxidoreductase subunit D 2 (388 aa).

Belongs to the complex I 49 kDa subunit family. In terms of assembly, NDH-1 is composed of 14 different subunits. Subunits NuoB, C, D, E, F, and G constitute the peripheral sector of the complex.

The protein localises to the cell membrane. It carries out the reaction a quinone + NADH + 5 H(+)(in) = a quinol + NAD(+) + 4 H(+)(out). Functionally, NDH-1 shuttles electrons from NADH, via FMN and iron-sulfur (Fe-S) centers, to quinones in the respiratory chain. The immediate electron acceptor for the enzyme in this species is believed to be a menaquinone. Couples the redox reaction to proton translocation (for every two electrons transferred, four hydrogen ions are translocated across the cytoplasmic membrane), and thus conserves the redox energy in a proton gradient. The chain is NADH-quinone oxidoreductase subunit D 2 from Salinispora tropica (strain ATCC BAA-916 / DSM 44818 / JCM 13857 / NBRC 105044 / CNB-440).